We begin with the raw amino-acid sequence, 507 residues long: Congo red hypersensitive protein 1 (507 aa).

A signal peptide spans 1-22 (MKVLDLLTVLSASSLLSTFAAA). The GH16 domain maps to 34–260 (ASSTASCNPL…KVIVTDYSTG (227 aa)). A disulfide bridge links C40 with C48. N-linked (GlcNAc...) asparagine glycosylation occurs at N117. E134 functions as the Nucleophile in the catalytic mechanism. The Proton donor role is filled by E138. Residue E138 participates in chitin binding. N-linked (GlcNAc...) asparagine glycosylation is found at N177 and N201. Residues W219 and T230 each coordinate chitin. 2 disordered regions span residues 329-368 (SSSASSTVSSSVSSTVSSSSSVSSSSSTSPSSSTATSSKT) and 381-478 (SSFE…TNSV). 2 stretches are compositionally biased toward low complexity: residues 381-439 (SSFE…PVQD) and 451-477 (TSSTTQISSKYTSTIQSSSSEASSTNS). N482 is lipidated: GPI-anchor amidated asparagine. The propeptide at 483–507 (GADLAQSLPREGKLFSVLVALLALL) is removed in mature form.

This sequence belongs to the glycosyl hydrolase 16 family. CRH1 subfamily. The GPI-anchor is attached to the protein in the endoplasmic reticulum and serves to target the protein to the cell surface. There, the glucosamine-inositol phospholipid moiety is cleaved off and the GPI-modified mannoprotein is covalently attached via its lipidless GPI glycan remnant to the 1,6-beta-glucan of the outer cell wall layer.

It is found in the secreted. Its subcellular location is the cell wall. The protein localises to the membrane. It catalyses the reaction Random endo-hydrolysis of N-acetyl-beta-D-glucosaminide (1-&gt;4)-beta-linkages in chitin and chitodextrins.. Functionally, dual chitinase/transglycosylase that plays a role in cell wall architecture. Chitinase and transglycosylase activities are coupled. Required for the polysaccharide cross-linking at the septa and the cell wall. More specifically, transfers chitin to both beta(1-3)- and beta(1-6)glucan in the cell wall. The minimal number of intact hexopyranose units required in the molecule of the acceptor oligosaccharide is two and the effectivity of the acceptor increased with the increasing length of its oligosaccharide chain. The chain is Congo red hypersensitive protein 1 from Saccharomyces cerevisiae (strain ATCC 204508 / S288c) (Baker's yeast).